Here is a 955-residue protein sequence, read N- to C-terminus: RNA polymerase-associated protein RapA (955 aa).

The region spanning 163 to 333 is the Helicase ATP-binding domain; that stretch reads EVGHRYAPRV…FARLRLLDPE (171 aa). An ATP-binding site is contributed by 176-183; sequence DEVGLGKT. A DEAH box motif is present at residues 279–282; the sequence is DEAH. The 165-residue stretch at 478–642 folds into the Helicase C-terminal domain; the sequence is RVEWLLELLL…AVRDELFELL (165 aa).

It belongs to the SNF2/RAD54 helicase family. RapA subfamily. Interacts with the RNAP. Has a higher affinity for the core RNAP than for the holoenzyme. Its ATPase activity is stimulated by binding to RNAP.

Its function is as follows. Transcription regulator that activates transcription by stimulating RNA polymerase (RNAP) recycling in case of stress conditions such as supercoiled DNA or high salt concentrations. Probably acts by releasing the RNAP, when it is trapped or immobilized on tightly supercoiled DNA. Does not activate transcription on linear DNA. Probably not involved in DNA repair. The polypeptide is RNA polymerase-associated protein RapA (Aeromonas hydrophila subsp. hydrophila (strain ATCC 7966 / DSM 30187 / BCRC 13018 / CCUG 14551 / JCM 1027 / KCTC 2358 / NCIMB 9240 / NCTC 8049)).